Here is a 71-residue protein sequence, read N- to C-terminus: DNA-directed RNA polymerases II, IV and V subunit 10 (71 aa).

Residues Cys-7, Cys-10, Cys-44, and Cys-45 each contribute to the Zn(2+) site.

Belongs to the archaeal Rpo10/eukaryotic RPB10 RNA polymerase subunit family. Component of the RNA polymerase II, IV and V complexes. Interacts with NRPD1.

Its subcellular location is the nucleus. DNA-dependent RNA polymerase catalyzes the transcription of DNA into RNA using the four ribonucleoside triphosphates as substrates. Component of RNA polymerase II which synthesizes mRNA precursors and many functional non-coding RNAs. Pol II is the central component of the basal RNA polymerase II transcription machinery. It is composed of mobile elements that move relative to each other. Component of RNA polymerases IV and V which mediate short-interfering RNAs (siRNA) accumulation and subsequent RNA-directed DNA methylation-dependent (RdDM) transcriptional gene silencing (TGS) of endogenous repeated sequences, including transposable elements. This is DNA-directed RNA polymerases II, IV and V subunit 10 (NRPB10) from Arabidopsis thaliana (Mouse-ear cress).